Here is a 585-residue protein sequence, read N- to C-terminus: Pyruvate kinase (585 aa).

Arg-32 is a binding site for substrate. K(+)-binding residues include Asn-34, Ser-36, Asp-66, and Thr-67. 34–37 contributes to the ATP binding site; the sequence is NFSH. Positions 73 and 156 each coordinate ATP. Residue Glu-221 coordinates Mg(2+). Positions 244, 245, and 277 each coordinate substrate. Asp-245 provides a ligand contact to Mg(2+).

Belongs to the pyruvate kinase family. The protein in the C-terminal section; belongs to the PEP-utilizing enzyme family. The cofactor is Mg(2+). K(+) is required as a cofactor.

The enzyme catalyses pyruvate + ATP = phosphoenolpyruvate + ADP + H(+). It participates in carbohydrate degradation; glycolysis; pyruvate from D-glyceraldehyde 3-phosphate: step 5/5. This chain is Pyruvate kinase (pyk), found in Staphylococcus aureus (strain USA300).